A 100-amino-acid chain; its full sequence is MHHIGYEVLQETFVLIRNVFSYSNQGEYSVTYVREIADALYNIPHSIQKQHDTFLEFEFKLLEETLMQMEFGKVAAQNIPHFRMYAARVQQLLRKRYKEV.

This is an uncharacterized protein from Bacillus anthracis.